We begin with the raw amino-acid sequence, 308 residues long: Acetaldehyde dehydrogenase (308 aa).

10 to 13 (SGNI) provides a ligand contact to NAD(+). Cysteine 128 functions as the Acyl-thioester intermediate in the catalytic mechanism. NAD(+) contacts are provided by residues 159-167 (SAGPGTRAN) and asparagine 285.

This sequence belongs to the acetaldehyde dehydrogenase family.

It catalyses the reaction acetaldehyde + NAD(+) + CoA = acetyl-CoA + NADH + H(+). This Salinispora tropica (strain ATCC BAA-916 / DSM 44818 / JCM 13857 / NBRC 105044 / CNB-440) protein is Acetaldehyde dehydrogenase.